The following is a 332-amino-acid chain: Fructose-1,6-bisphosphatase class 1 (332 aa).

Mg(2+) contacts are provided by Glu-89, Asp-110, Leu-112, and Asp-113. Residues 113 to 116, Asn-206, Tyr-239, 257 to 259, and Lys-269 each bind substrate; these read DGSS and YLY. Residue Glu-275 coordinates Mg(2+).

It belongs to the FBPase class 1 family. As to quaternary structure, homotetramer. Mg(2+) serves as cofactor.

It localises to the cytoplasm. It carries out the reaction beta-D-fructose 1,6-bisphosphate + H2O = beta-D-fructose 6-phosphate + phosphate. It participates in carbohydrate biosynthesis; gluconeogenesis. This chain is Fructose-1,6-bisphosphatase class 1, found in Enterobacter sp. (strain 638).